The primary structure comprises 141 residues: Hemoglobin subunit alpha-2 (141 aa).

The 141-residue stretch at valine 1–arginine 141 folds into the Globin domain. Histidine 58 provides a ligand contact to O2. Histidine 87 lines the heme b pocket.

The protein belongs to the globin family. Heterotetramer of two alpha chains and two beta chains. Red blood cells.

Involved in oxygen transport from the lung to the various peripheral tissues. This Tachyglossus aculeatus aculeatus (Southeast Australian short-beaked echidna) protein is Hemoglobin subunit alpha-2.